Consider the following 644-residue polypeptide: DNA mismatch repair protein MutL (644 aa).

2 disordered regions span residues 353–399 (SESG…SQLT) and 420–440 (GSMA…RARA). The segment covering 370 to 381 (SPESKTHSTWNE) has biased composition (polar residues). The span at 383–399 (SRVDTSRVEISRDSQLT) shows a compositional bias: basic and acidic residues.

Belongs to the DNA mismatch repair MutL/HexB family.

This protein is involved in the repair of mismatches in DNA. It is required for dam-dependent methyl-directed DNA mismatch repair. May act as a 'molecular matchmaker', a protein that promotes the formation of a stable complex between two or more DNA-binding proteins in an ATP-dependent manner without itself being part of a final effector complex. In Shewanella sp. (strain MR-4), this protein is DNA mismatch repair protein MutL.